The sequence spans 170 residues: MSSNKIVLTSSDDESFEVEEAVARKLKVIAHMIDDDCADKAIPLENVTGNILALVIEYCKKHVLDDVDDSDDSTEATSENVNEEAKNELRTWDAEFMKEFDMETVMKLILAVNYLNVQDLLGLTCQTVADHMKDMSPEEVRELFNIENDYTPEEEDAIRKENAWAFEDLK.

The interaction with the F-box domain of F-box proteins stretch occupies residues 109 to 167 (ILAVNYLNVQDLLGLTCQTVADHMKDMSPEEVRELFNIENDYTPEEEDAIRKENAWAFE).

This sequence belongs to the SKP1 family. As to quaternary structure, part of a SCF (SKP1-cullin-F-box) protein ligase complex. Interacts with CPR1/CPR30, At3g61590 and At4g11590. As to expression, mainly detected in the siliques.

It is found in the nucleus. It participates in protein modification; protein ubiquitination. In terms of biological role, involved in ubiquitination and subsequent proteasomal degradation of target proteins. Together with CUL1, RBX1 and a F-box protein, it forms a SCF E3 ubiquitin ligase complex. The functional specificity of this complex depends on the type of F-box protein. In the SCF complex, it serves as an adapter that links the F-box protein to CUL1. The sequence is that of SKP1-like protein 16 (ASK16) from Arabidopsis thaliana (Mouse-ear cress).